The chain runs to 283 residues: Nopaline-binding periplasmic protein (283 aa).

The first 25 residues, M1–A25, serve as a signal peptide directing secretion. C63 and C70 are oxidised to a cystine.

The protein belongs to the bacterial solute-binding protein 3 family.

Its subcellular location is the periplasm. In terms of biological role, component of the nopaline active transport system probably consisting of four subunits: Q, M, P and T. This system is also capable of transporting octopine provided that catabolic functions are induced with nopaline. The sequence is that of Nopaline-binding periplasmic protein (nocT) from Agrobacterium fabrum (strain C58 / ATCC 33970) (Agrobacterium tumefaciens (strain C58)).